The sequence spans 249 residues: UPF0696 protein C11orf68 homolog (249 aa).

This sequence belongs to the UPF0696 family.

This Danio rerio (Zebrafish) protein is UPF0696 protein C11orf68 homolog.